Consider the following 825-residue polypeptide: Probable phosphoketolase (825 aa).

The protein belongs to the XFP family. The cofactor is thiamine diphosphate.

The polypeptide is Probable phosphoketolase (Bifidobacterium animalis subsp. lactis (strain AD011)).